A 114-amino-acid polypeptide reads, in one-letter code: Large ribosomal subunit protein bL19 (114 aa).

It belongs to the bacterial ribosomal protein bL19 family.

Its function is as follows. This protein is located at the 30S-50S ribosomal subunit interface and may play a role in the structure and function of the aminoacyl-tRNA binding site. This chain is Large ribosomal subunit protein bL19, found in Clostridium botulinum (strain ATCC 19397 / Type A).